The sequence spans 62 residues: Bowman-Birk type proteinase inhibitor B7 (62 aa).

Intrachain disulfides connect Cys5/Cys59, Cys6/Cys23, Cys13/Cys21, Cys30/Cys37, and Cys34/Cys51.

This sequence belongs to the Bowman-Birk serine protease inhibitor family. In terms of tissue distribution, expressed in bulb (at protein level).

In terms of biological role, serine protease inhibitor. Inhibits trypsin (Ki = 65 nM) and weakly inhibits chymotrypsin (Ki = 295 nM). Does not inhibit bacterial subtilisin. The sequence is that of Bowman-Birk type proteinase inhibitor B7 from Hyacinthus orientalis (Common hyacinth).